Here is a 156-residue protein sequence, read N- to C-terminus: ATP synthase subunit b (156 aa).

The chain crosses the membrane as a helical span at residues 3–23; it reads ITFTIFAQSLAFAALIWIVAT.

It belongs to the ATPase B chain family. As to quaternary structure, F-type ATPases have 2 components, F(1) - the catalytic core - and F(0) - the membrane proton channel. F(1) has five subunits: alpha(3), beta(3), gamma(1), delta(1), epsilon(1). F(0) has three main subunits: a(1), b(2) and c(10-14). The alpha and beta chains form an alternating ring which encloses part of the gamma chain. F(1) is attached to F(0) by a central stalk formed by the gamma and epsilon chains, while a peripheral stalk is formed by the delta and b chains.

The protein resides in the cell inner membrane. In terms of biological role, f(1)F(0) ATP synthase produces ATP from ADP in the presence of a proton or sodium gradient. F-type ATPases consist of two structural domains, F(1) containing the extramembraneous catalytic core and F(0) containing the membrane proton channel, linked together by a central stalk and a peripheral stalk. During catalysis, ATP synthesis in the catalytic domain of F(1) is coupled via a rotary mechanism of the central stalk subunits to proton translocation. Component of the F(0) channel, it forms part of the peripheral stalk, linking F(1) to F(0). This is ATP synthase subunit b from Xylella fastidiosa (strain M23).